We begin with the raw amino-acid sequence, 265 residues long: 5'-nucleotidase SurE (265 aa).

Positions 8, 9, 40, and 98 each coordinate a divalent metal cation.

This sequence belongs to the SurE nucleotidase family. It depends on a divalent metal cation as a cofactor.

The protein resides in the cytoplasm. It catalyses the reaction a ribonucleoside 5'-phosphate + H2O = a ribonucleoside + phosphate. Nucleotidase that shows phosphatase activity on nucleoside 5'-monophosphates. This Thermosynechococcus vestitus (strain NIES-2133 / IAM M-273 / BP-1) protein is 5'-nucleotidase SurE.